A 160-amino-acid chain; its full sequence is Interleukin-36 alpha (160 aa).

A propeptide spanning residues 1-7 (MNKEKEL) is cleaved from the precursor. The residue at position 98 (tyrosine 98) is a 3'-nitrotyrosine.

This sequence belongs to the IL-1 family. As to quaternary structure, interacts with TMED10; the interaction mediates the translocation from the cytoplasm into the ERGIC (endoplasmic reticulum-Golgi intermediate compartment) and thereby secretion. In terms of processing, N-terminal truncation leads to a dramatic enhancement of its activity (&gt;1000-fold). As to expression, highly expressed in embryonic tissue and in tissues containing epithelial cells. Elevated expression levels are detected in chronic kidney disease; expressed inepithelia from the distal convoluted tubules (DCTs) to the cortical collecting ducts (CCDs) in single nephrons (at protein level).

It is found in the cytoplasm. The protein localises to the secreted. Its function is as follows. Cytokine that binds to and signals through the IL1RL2/IL-36R receptor which in turn activates NF-kappa-B and MAPK signaling pathways in target cells linked to a pro-inflammatory response. Part of the IL-36 signaling system that is thought to be present in epithelial barriers and to take part in local inflammatory response; similar to the IL-1 system with which it shares the coreceptor IL1RAP. Seems to be involved in skin inflammatory response by acting on keratinocytes, dendritic cells and indirectly on T-cells to drive tissue infiltration, cell maturation and cell proliferation. Induces the production of pro-inflammatory cytokines, including IL-12, Il-1 beta, IL-6, TNF-alpha and IL-23 in bone marrow-derived dendritic cells (BMDCs). Involved in dendritic cell maturation by stimulating the surface expression of CD80, CD86 and MHC class II. Induces the production of IFN-gamma, IL-4 and IL-17 by cultured CD4(+) T-cells and splenocytes. May play a role in pro-inflammatory effects in the lung: induces the expression of CXCL1 and CXCL2 in the lung, and the expression of TNF-alpha, IL-36c, IL-1A, IL-1B, CXCL1 and CXCL2 in isolated splenic CD11c(+) alveolar macrophages. May be involved in T-cell maturation by stimulating the surface expression of CD40 and modestly CD80 and CD86 in splenic CD11c(+) cells. May be involved in CD4(+) T-cell proliferation. Induces NF-kappa B activation in macrophages. The sequence is that of Interleukin-36 alpha from Mus musculus (Mouse).